Reading from the N-terminus, the 203-residue chain is E3 ubiquitin-protein ligase RNF152 (203 aa).

An RING-type zinc finger spans residues 12–55 (CQICFNYYSPRRRPKLLDCKHTCCSVCLQQMRTSQKDLRCPWCR). The helical transmembrane segment at 167 to 187 (SGVCTVILVACVLVFLLGIVL) threads the bilayer.

Belongs to the RNF152 family.

It is found in the lysosome membrane. The catalysed reaction is S-ubiquitinyl-[E2 ubiquitin-conjugating enzyme]-L-cysteine + [acceptor protein]-L-lysine = [E2 ubiquitin-conjugating enzyme]-L-cysteine + N(6)-ubiquitinyl-[acceptor protein]-L-lysine.. It functions in the pathway protein modification; protein ubiquitination. In terms of biological role, E3 ubiquitin-protein ligase that acts as a negative regulator of mTORC1 signaling by mediating ubiquitination of RagA/RRAGA and RHEB. Catalyzes 'Lys-63'-linked polyubiquitination of RagA/RRAGA in response to amino acid starvation, thereby regulating mTORC1 signaling. Also mediates monoubiquitination of RHEB, promoting its association with the TSC-TBC complex and subsequent inhibition. Also mediates 'Lys-48'-linked polyubiquitination of target proteins and their subsequent targeting to the proteasome for degradation. This chain is E3 ubiquitin-protein ligase RNF152, found in Gallus gallus (Chicken).